The following is a 536-amino-acid chain: Xylulose kinase (536 aa).

Positions 99, 170, 280, and 281 each coordinate substrate. ATP is bound by residues tryptophan 355, glycine 441–alanine 442, and asparagine 445.

Belongs to the FGGY kinase family. As to quaternary structure, monomer.

The catalysed reaction is D-xylulose + ATP = D-xylulose 5-phosphate + ADP + H(+). Its function is as follows. Phosphorylates D-xylulose to produce D-xylulose 5-phosphate, a molecule that may play an important role in the regulation of glucose metabolism and lipogenesis. This chain is Xylulose kinase (Xylb), found in Rattus norvegicus (Rat).